The chain runs to 1153 residues: PPi-type phosphoenolpyruvate carboxykinase 3 (1153 aa).

The stretch at 1085–1131 (RQKLEVAKLNKDLAYLNKTIAEKPRLAETLNKQIAAVKEELQYVSSE) forms a coiled coil.

Belongs to the PPi-type phosphoenolpyruvate carboxykinase family. In terms of assembly, monomer and trimer; forms heterotrimers with PEPCK1 and PEPCK2.

The protein resides in the cytoplasm. It is found in the cytosol. It carries out the reaction oxaloacetate + diphosphate = phosphoenolpyruvate + phosphate + CO2. Functionally, inorganic pyrophosphate (PPi)-dependent phosphoenolpyruvate carboxykinase, which regulates the carbon flow of the central metabolism by fixing CO(2) to phosphoenolpyruvate to produce oxaloacetate. Can also produce pyruvate and diphosphate from phosphoenolpyruvate and phosphate. The sequence is that of PPi-type phosphoenolpyruvate carboxykinase 3 from Entamoeba histolytica (strain ATCC 30459 / HM-1:IMSS / ABRM).